A 214-amino-acid polypeptide reads, in one-letter code: MKAFTQHIGLVAPLDRANVDTDQIIPKQFLKSIKRTGFGPNLFDEWRYLDVGQPYQDNSKRPLNQDFVLNHARYQGASVLLARENFGCGSSREHAPWALDEYGFRSVIAPSFADIFFNNSFKNGLLPIILDAAEVDELFKQVEATPGYQLTIDLEAQAVTRPDGKVLKFEIDAFRKHCLLNGLDDIGLTLQDSDAIKAFEGKHRASQPWLFRDA.

This sequence belongs to the LeuD family. LeuD type 1 subfamily. In terms of assembly, heterodimer of LeuC and LeuD.

The catalysed reaction is (2R,3S)-3-isopropylmalate = (2S)-2-isopropylmalate. It participates in amino-acid biosynthesis; L-leucine biosynthesis; L-leucine from 3-methyl-2-oxobutanoate: step 2/4. In terms of biological role, catalyzes the isomerization between 2-isopropylmalate and 3-isopropylmalate, via the formation of 2-isopropylmaleate. This Pseudomonas entomophila (strain L48) protein is 3-isopropylmalate dehydratase small subunit.